The sequence spans 113 residues: UPF0122 protein Sez_1013 (113 aa).

This sequence belongs to the UPF0122 family.

Might take part in the signal recognition particle (SRP) pathway. This is inferred from the conservation of its genetic proximity to ftsY/ffh. May be a regulatory protein. The chain is UPF0122 protein Sez_1013 from Streptococcus equi subsp. zooepidemicus (strain MGCS10565).